The chain runs to 762 residues: cGMP-dependent protein kinase 2 (762 aa).

A disordered region spans residues 1 to 25; the sequence is MGNGSVKPKHSKHPDGHSGNLTTDA. Residue G2 is the site of N-myristoyl glycine attachment. A coiled-coil region spans residues 23–85; it reads TDALRNKVTE…CIQLNKLQDV (63 aa). Phosphoserine is present on residues S110 and S117. The segment at 117–138 is disordered; the sequence is SRRGAKAGVSAEPTTRTYDLNK. The segment at 168–283 is cGMP-binding, high affinity; cAMP-binding, moderate affinity; sequence FLKRLDPQQI…DEQYRNFLRS (116 aa). 3',5'-cyclic AMP contacts are provided by residues 232-235 and 242-243; these read GELA and RT. 3',5'-cyclic GMP contacts are provided by residues 232-235, 242-243, K347, 356-359, 366-367, D412, and R415; these read GELA, RT, GEKA, and RS. The tract at residues 286–416 is cGMP-binding, high affinity; cAMP-binding, low affinity; sequence LLKNLPEDKL…NLNRDDEKRH (131 aa). At S431 the chain carries Phosphoserine. The Protein kinase domain occupies 453-711; the sequence is LEIIATLGVG…INDIKKHRWL (259 aa). Residues 459 to 467 and K482 each bind ATP; that span reads LGVGGFGRV. The active-site Proton acceptor is the D576. T609 is subject to Phosphothreonine. An AGC-kinase C-terminal domain is found at 712 to 762; that stretch reads NGFNWEGLKARSLPSPLQRELKGPIDHSYFDKYPPEKGMPPDELSGWDKDF. Residues 740–762 are disordered; sequence YFDKYPPEKGMPPDELSGWDKDF.

Belongs to the protein kinase superfamily. AGC Ser/Thr protein kinase family. cGMP subfamily. As to quaternary structure, interacts with GRIA1/GLUR1. Myristoylation mediates membrane localization. As to expression, highly concentrated in brain, lung and intestinal mucosa.

It localises to the apical cell membrane. The enzyme catalyses L-seryl-[protein] + ATP = O-phospho-L-seryl-[protein] + ADP + H(+). It carries out the reaction L-threonyl-[protein] + ATP = O-phospho-L-threonyl-[protein] + ADP + H(+). Its activity is regulated as follows. Binding of cGMP results in enzyme activation. In terms of biological role, crucial regulator of intestinal secretion and bone growth. Phosphorylates and activates CFTR on the plasma membrane. Plays a key role in intestinal secretion by regulating cGMP-dependent translocation of CFTR in jejunum. Acts downstream of NMDAR to activate the plasma membrane accumulation of GRIA1/GLUR1 in synapse and increase synaptic plasticity. Phosphorylates GRIA1/GLUR1 at Ser-863. Acts as a regulator of gene expression and activator of the extracellular signal-regulated kinases MAPK3/ERK1 and MAPK1/ERK2 in mechanically stimulated osteoblasts. Under fluid shear stress, mediates ERK activation and subsequent induction of FOS, FOSL1/FRA1, FOSL2/FRA2 and FOSB that play a key role in the osteoblast anabolic response to mechanical stimulation. The protein is cGMP-dependent protein kinase 2 (PRKG2) of Homo sapiens (Human).